Consider the following 173-residue polypeptide: Nuclear transcription factor Y subunit B-8 (173 aa).

The interval 1–30 (MAESQAKSPGGCGSHESGGDQSPRSLHVRE) is disordered. N-acetylalanine is present on Ala-2. Residues 35-41 (LPIANIS) mediate DNA binding. A subunit association domain (SAD) region spans residues 62 to 73 (VQECVSEFISFV). Residues 123-173 (DTKGSAKGGDPNAKKDGQSSQNGQFSQLAHQGPYGNSQAQQHMMVPMPGTD) are disordered. The span at 140-163 (QSSQNGQFSQLAHQGPYGNSQAQQ) shows a compositional bias: polar residues.

The protein belongs to the NFYB/HAP3 subunit family. As to quaternary structure, heterotrimeric transcription factor composed of three components, NF-YA, NF-YB and NF-YC. NF-YB and NF-YC must interact and dimerize for NF-YA association and DNA binding. In terms of tissue distribution, expressed in flowers and mature rosettes.

It is found in the nucleus. Its function is as follows. Component of the NF-Y/HAP transcription factor complex. The NF-Y complex stimulates the transcription of various genes by recognizing and binding to a CCAAT motif in promoters. The sequence is that of Nuclear transcription factor Y subunit B-8 (NFYB8) from Arabidopsis thaliana (Mouse-ear cress).